A 511-amino-acid polypeptide reads, in one-letter code: Centrosomal protein CCDC61 (511 aa).

Met1 carries the post-translational modification N-acetylmethionine. The segment at 1-143 (MDQPAGLQVD…PLPLPYQGKP (143 aa)) is head domain. Coiled coils occupy residues 176–203 (IWHL…SREE) and 246–273 (SRRL…LNSE). Phosphothreonine is present on Thr283. Disordered stretches follow at residues 284–413 (LPPV…DSFR) and 429–476 (SHSV…GGWV). Basic and acidic residues predominate over residues 290-302 (REGRASSSRERST). Phosphoserine is present on residues Ser330 and Ser332. Positions 360-369 (KQQQQQRNRM) are enriched in low complexity. 2 positions are modified to phosphoserine: Ser371 and Ser374. Over residues 433 to 442 (SRSRRCRGRG) the composition is skewed to basic residues. Ser446 bears the Phosphoserine mark. Residues 449-458 (PWSRSKTKST) are compositionally biased toward polar residues. Residue Ser472 is modified to Phosphoserine.

Belongs to the CCDC61 family. In terms of assembly, forms homodimers (via head domain). Interacts with CEP170. Interacts with PCM1 and CEP131. Binds tubulin.

It is found in the cytoplasm. The protein localises to the cytoskeleton. Its subcellular location is the microtubule organizing center. The protein resides in the centrosome. It localises to the centriolar satellite. It is found in the cilium basal body. Functionally, microtubule-binding centrosomal protein required for centriole cohesion, independently of the centrosome-associated protein/CEP250 and rootletin/CROCC linker. In interphase, required for anchoring microtubule at the mother centriole subdistal appendages and for centrosome positioning. During mitosis, may be involved in spindle assembly and chromatin alignment by regulating the organization of spindle microtubules into a symmetrical structure. Plays a non-essential role in ciliogenesis. In Mus musculus (Mouse), this protein is Centrosomal protein CCDC61.